Here is a 423-residue protein sequence, read N- to C-terminus: Putative RING-H2 finger protein ATL49 (423 aa).

The chain crosses the membrane as a helical span at residues 43 to 63 (ILLIIIILSIIFFISGLLHIL). The RING-type; atypical zinc-finger motif lies at 126-168 (CPVCLCEFETEDKLRLLPKCSHAFHVECIDTWLLSHSTCPLCR). 2 disordered regions span residues 213-236 (NNDSESTRIRSGRKSCDPDGDMDG) and 377-399 (HRIPPEESLKSENSESLETKTPS). The span at 379–389 (IPPEESLKSEN) shows a compositional bias: basic and acidic residues.

Belongs to the RING-type zinc finger family. ATL subfamily.

The protein resides in the membrane. The catalysed reaction is S-ubiquitinyl-[E2 ubiquitin-conjugating enzyme]-L-cysteine + [acceptor protein]-L-lysine = [E2 ubiquitin-conjugating enzyme]-L-cysteine + N(6)-ubiquitinyl-[acceptor protein]-L-lysine.. It functions in the pathway protein modification; protein ubiquitination. Functionally, may be involved in female gametophyte development. The chain is Putative RING-H2 finger protein ATL49 (ATL49) from Arabidopsis thaliana (Mouse-ear cress).